The chain runs to 280 residues: Manganese transport system membrane protein MntC (280 aa).

9 consecutive transmembrane segments (helical) span residues 16–36, 41–61, 62–82, 92–112, 137–157, 168–188, 193–213, 221–241, and 244–264; these read ALITSVTVGIVSGVIGSFIIL, LMGDAISHAVLPGVAISYMMG, MNFFIGAATFGIAAALGIGFV, TAIGIVFSAFFALGIILISFA, TIIIAIIVISLVALFYKEFLV, YGLNVKFLHYFLMLLLTLVTV, TVGIILVVAMLITPAATAYLL, IVLASTFGAVSAIIGLYFSYI, and LASGAAMVLVATIIFFIAFLF.

Belongs to the ABC-3 integral membrane protein family.

Its subcellular location is the cell membrane. This protein is probably a component of a manganese permease, a binding protein-dependent, ATP-driven transport system. This is Manganese transport system membrane protein MntC (mntC) from Listeria monocytogenes serovar 1/2a (strain ATCC BAA-679 / EGD-e).